The chain runs to 193 residues: Holliday junction branch migration complex subunit RuvA (193 aa).

The tract at residues 1 to 64 (MIGRIAGVLL…EDAHLLYGFG (64 aa)) is domain I. Positions 65–139 (TAEERSTFRE…GKIGADLGAM (75 aa)) are domain II. The tract at residues 139–143 (MAGAA) is flexible linker. Positions 144–193 (SASDHASDILNALLALGYSEKEALTAVKNVPAGTGVSEGIKLALKALSKG) are domain III.

It belongs to the RuvA family. As to quaternary structure, homotetramer. Forms an RuvA(8)-RuvB(12)-Holliday junction (HJ) complex. HJ DNA is sandwiched between 2 RuvA tetramers; dsDNA enters through RuvA and exits via RuvB. An RuvB hexamer assembles on each DNA strand where it exits the tetramer. Each RuvB hexamer is contacted by two RuvA subunits (via domain III) on 2 adjacent RuvB subunits; this complex drives branch migration. In the full resolvosome a probable DNA-RuvA(4)-RuvB(12)-RuvC(2) complex forms which resolves the HJ.

It localises to the cytoplasm. In terms of biological role, the RuvA-RuvB-RuvC complex processes Holliday junction (HJ) DNA during genetic recombination and DNA repair, while the RuvA-RuvB complex plays an important role in the rescue of blocked DNA replication forks via replication fork reversal (RFR). RuvA specifically binds to HJ cruciform DNA, conferring on it an open structure. The RuvB hexamer acts as an ATP-dependent pump, pulling dsDNA into and through the RuvAB complex. HJ branch migration allows RuvC to scan DNA until it finds its consensus sequence, where it cleaves and resolves the cruciform DNA. The protein is Holliday junction branch migration complex subunit RuvA of Paraburkholderia phytofirmans (strain DSM 17436 / LMG 22146 / PsJN) (Burkholderia phytofirmans).